Reading from the N-terminus, the 103-residue chain is Large ribosomal subunit protein bL21 (103 aa).

It belongs to the bacterial ribosomal protein bL21 family. Part of the 50S ribosomal subunit. Contacts protein L20.

Functionally, this protein binds to 23S rRNA in the presence of protein L20. The protein is Large ribosomal subunit protein bL21 of Psychromonas ingrahamii (strain DSM 17664 / CCUG 51855 / 37).